Here is an 82-residue protein sequence, read N- to C-terminus: Conotoxin C11GB (82 aa).

Residues 1 to 22 (MKLTCVMIVAVLFLTAWTVVTA) form the signal peptide. The propeptide occupies 23–53 (EPHSSNVLENLYLKAHHEMENPEASKLNTRD). Intrachain disulfides connect Cys-55–Cys-72, Cys-62–Cys-76, and Cys-71–Cys-80.

The protein belongs to the conotoxin O1 superfamily. Expressed by the venom duct.

It is found in the secreted. The sequence is that of Conotoxin C11GB from Conus vexillum (Flag cone).